We begin with the raw amino-acid sequence, 110 residues long: Hydrogenase maturation factor HypA (110 aa).

H2 is a Ni(2+) binding site. Residues C70, C73, C86, and C89 each coordinate Zn(2+).

Belongs to the HypA/HybF family.

Its function is as follows. Involved in the maturation of [NiFe] hydrogenases. Required for nickel insertion into the metal center of the hydrogenase. The sequence is that of Hydrogenase maturation factor HypA from Geotalea daltonii (strain DSM 22248 / JCM 15807 / FRC-32) (Geobacter daltonii).